Here is a 129-residue protein sequence, read N- to C-terminus: Large ribosomal subunit protein uL22 (129 aa).

Belongs to the universal ribosomal protein uL22 family. In terms of assembly, part of the 50S ribosomal subunit.

Functionally, this protein binds specifically to 23S rRNA; its binding is stimulated by other ribosomal proteins, e.g. L4, L17, and L20. It is important during the early stages of 50S assembly. It makes multiple contacts with different domains of the 23S rRNA in the assembled 50S subunit and ribosome. Its function is as follows. The globular domain of the protein is located near the polypeptide exit tunnel on the outside of the subunit, while an extended beta-hairpin is found that lines the wall of the exit tunnel in the center of the 70S ribosome. In Rhizobium etli (strain ATCC 51251 / DSM 11541 / JCM 21823 / NBRC 15573 / CFN 42), this protein is Large ribosomal subunit protein uL22.